An 80-amino-acid chain; its full sequence is uncharacterized protein (80 aa).

2 4Fe-4S ferredoxin-type domains span residues 21–49 (KIIE…AIKN) and 50–80 (NRVV…LYDA). The [4Fe-4S] cluster site is built by C30, C33, C36, C40, C60, C63, C66, and C70.

Requires [4Fe-4S] cluster as cofactor.

This is an uncharacterized protein from Methanocaldococcus jannaschii (strain ATCC 43067 / DSM 2661 / JAL-1 / JCM 10045 / NBRC 100440) (Methanococcus jannaschii).